The chain runs to 463 residues: Argininosuccinate lyase (463 aa).

Belongs to the lyase 1 family. Argininosuccinate lyase subfamily.

The protein localises to the cytoplasm. The catalysed reaction is 2-(N(omega)-L-arginino)succinate = fumarate + L-arginine. The protein operates within amino-acid biosynthesis; L-arginine biosynthesis; L-arginine from L-ornithine and carbamoyl phosphate: step 3/3. The chain is Argininosuccinate lyase from Chlorobaculum tepidum (strain ATCC 49652 / DSM 12025 / NBRC 103806 / TLS) (Chlorobium tepidum).